A 260-amino-acid chain; its full sequence is Protein SVS1 (260 aa).

Positions 1–19 (MIFKILCSLLLVTSNFASA) are cleaved as a signal peptide. 3 N-linked (GlcNAc...) asparagine glycosylation sites follow: asparagine 23, asparagine 249, and asparagine 256.

Its function is as follows. Required for vanadate resistance. The protein is Protein SVS1 (SVS1) of Saccharomyces cerevisiae (strain ATCC 204508 / S288c) (Baker's yeast).